Reading from the N-terminus, the 102-residue chain is Putative sortase YwpE (102 aa).

Residue H17 is the Proton donor/acceptor of the active site. C78 (acyl-thioester intermediate) is an active-site residue.

This sequence belongs to the bacterial sortase family.

Its function is as follows. Seems not to play a major role if any as a sortase. This is Putative sortase YwpE (ywpE) from Bacillus subtilis (strain 168).